The chain runs to 237 residues: Cobalt-precorrin-2 C(20)-methyltransferase (237 aa).

The protein belongs to the precorrin methyltransferase family. Homodimer.

It catalyses the reaction Co-precorrin-2 + S-adenosyl-L-methionine = Co-precorrin-3 + S-adenosyl-L-homocysteine + H(+). It participates in cofactor biosynthesis; adenosylcobalamin biosynthesis; cob(II)yrinate a,c-diamide from sirohydrochlorin (anaerobic route): step 2/10. In terms of biological role, methylates cobalt-precorrin-2 at the C-20 position to produce cobalt-precorrin-3A in the anaerobic cobalamin biosynthesis pathway. The sequence is that of Cobalt-precorrin-2 C(20)-methyltransferase (cbiL) from Salmonella typhimurium (strain LT2 / SGSC1412 / ATCC 700720).